The sequence spans 264 residues: Thymidylate synthase (264 aa).

DUMP is bound at residue R21. Residue H51 coordinates (6R)-5,10-methylene-5,6,7,8-tetrahydrofolate. A dUMP-binding site is contributed by 126–127 (RR). C146 acts as the Nucleophile in catalysis. Residues 166–169 (RSAD), N177, and 207–209 (HLY) contribute to the dUMP site. A (6R)-5,10-methylene-5,6,7,8-tetrahydrofolate-binding site is contributed by D169. A263 provides a ligand contact to (6R)-5,10-methylene-5,6,7,8-tetrahydrofolate.

The protein belongs to the thymidylate synthase family. Bacterial-type ThyA subfamily. In terms of assembly, homodimer.

It is found in the cytoplasm. It catalyses the reaction dUMP + (6R)-5,10-methylene-5,6,7,8-tetrahydrofolate = 7,8-dihydrofolate + dTMP. The protein operates within pyrimidine metabolism; dTTP biosynthesis. Its function is as follows. Catalyzes the reductive methylation of 2'-deoxyuridine-5'-monophosphate (dUMP) to 2'-deoxythymidine-5'-monophosphate (dTMP) while utilizing 5,10-methylenetetrahydrofolate (mTHF) as the methyl donor and reductant in the reaction, yielding dihydrofolate (DHF) as a by-product. This enzymatic reaction provides an intracellular de novo source of dTMP, an essential precursor for DNA biosynthesis. The chain is Thymidylate synthase from Hyphomonas neptunium (strain ATCC 15444).